The following is an 87-amino-acid chain: Beta-toxin Cn4 (87 aa).

An N-terminal signal peptide occupies residues 1–19; the sequence is MNSLLMITACLALVGTVWA. One can recognise an LCN-type CS-alpha/beta domain in the interval 20–85; the sequence is KEGYLVNSYT…VWPLKNKTCN (66 aa). 4 disulfide bridges follow: C31–C84, C35–C60, C44–C65, and C48–C67. N85 is subject to Asparagine amide.

The protein belongs to the long (4 C-C) scorpion toxin superfamily. Sodium channel inhibitor family. Beta subfamily. As to expression, expressed by the venom gland.

Its subcellular location is the secreted. In terms of biological role, beta toxins bind voltage-independently at site-4 of sodium channels (Nav) and shift the voltage of activation toward more negative potentials thereby affecting sodium channel activation and promoting spontaneous and repetitive firing. This toxin affects the activation mechanism of sodium channels of squid axon. It also competes with Cn2 in rat brain synaptosomes. Is lethal to mice. In Centruroides noxius (Mexican scorpion), this protein is Beta-toxin Cn4.